The primary structure comprises 349 residues: Short-wave-sensitive opsin 1 (349 aa).

The Extracellular segment spans residues 1 to 34 (MSKMPEEEEFYLFKNISSVGPWDGPQYHIAPVWA). Asn-15 is a glycosylation site (N-linked (GlcNAc...) asparagine). Residues 35–59 (FQLQAAFMGIVFLAGLPLNSMVLVA) form a helical membrane-spanning segment. Over 60-71 (TVRYKKLRHPLN) the chain is Cytoplasmic. Residues 72–97 (YVLVNVSVGGFLLCIFSVLPVFVNSC) traverse the membrane as a helical segment. Residues 98–111 (NGYFVFGRHVCALE) are Extracellular-facing. An intrachain disulfide couples Cys-108 to Cys-185. Residues 112-131 (GFLGTVAGLVTGWSLAFLAF) form a helical membrane-spanning segment. Residues 132–150 (ERYIVICKPFGNFRFSSKH) lie on the Cytoplasmic side of the membrane. A helical membrane pass occupies residues 151–174 (ALMVVLTTWTIGIGVSIPPFFGWS). At 175-200 (RYIAEGLQCSCGPDWYTVGTKYRSEY) the chain is on the extracellular side. A helical transmembrane segment spans residues 201 to 228 (YTWFLFIFCFIVPLSLICFSYAQLLRAL). Residues 229–250 (KAVAAQQQESATTQKAEREVSR) are Cytoplasmic-facing. A helical transmembrane segment spans residues 251–274 (MVVVMVGSFCVCYVPYAALAMYMV). Topologically, residues 275–282 (NNRNHGLD) are extracellular. A helical transmembrane segment spans residues 283–307 (LRLVSIPAFFSKSSCIYNPIIYCFM). Lys-294 bears the N6-(retinylidene)lysine mark. The Cytoplasmic portion of the chain corresponds to 308 to 349 (NKQFRACIMEMVCGKAMTDESDISSSQKTEVSTVSSSQVGPN).

Belongs to the G-protein coupled receptor 1 family. Opsin subfamily. Post-translationally, phosphorylated on some or all of the serine and threonine residues present in the C-terminal region.

Its subcellular location is the cell membrane. It is found in the photoreceptor inner segment. The protein resides in the cell projection. It localises to the cilium. The protein localises to the photoreceptor outer segment. Its subcellular location is the cytoplasm. It is found in the perinuclear region. Visual pigments are the light-absorbing molecules that mediate vision. They consist of an apoprotein, opsin, covalently linked to cis-retinal. Required for the maintenance of cone outer segment organization in the ventral retina, but not essential for the maintenance of functioning cone photoreceptors. Involved in ensuring correct abundance and localization of retinal membrane proteins. May increase spectral sensitivity in dim light. The chain is Short-wave-sensitive opsin 1 (OPN1SW) from Saimiri boliviensis boliviensis (Bolivian squirrel monkey).